Reading from the N-terminus, the 255-residue chain is tRNA (guanine-N(1)-)-methyltransferase (255 aa).

Residues glycine 113 and 133–138 (IGDYVL) each bind S-adenosyl-L-methionine.

It belongs to the RNA methyltransferase TrmD family. In terms of assembly, homodimer.

Its subcellular location is the cytoplasm. The enzyme catalyses guanosine(37) in tRNA + S-adenosyl-L-methionine = N(1)-methylguanosine(37) in tRNA + S-adenosyl-L-homocysteine + H(+). Functionally, specifically methylates guanosine-37 in various tRNAs. This Escherichia fergusonii (strain ATCC 35469 / DSM 13698 / CCUG 18766 / IAM 14443 / JCM 21226 / LMG 7866 / NBRC 102419 / NCTC 12128 / CDC 0568-73) protein is tRNA (guanine-N(1)-)-methyltransferase.